The following is a 211-amino-acid chain: Imidazole glycerol phosphate synthase subunit HisH (211 aa).

Residues 1 to 211 enclose the Glutamine amidotransferase type-1 domain; the sequence is MIGIIDYGMG…VGIATGRGNG (211 aa). Residue cysteine 79 is the Nucleophile of the active site. Catalysis depends on residues histidine 186 and glutamate 188.

Heterodimer of HisH and HisF.

It is found in the cytoplasm. It carries out the reaction 5-[(5-phospho-1-deoxy-D-ribulos-1-ylimino)methylamino]-1-(5-phospho-beta-D-ribosyl)imidazole-4-carboxamide + L-glutamine = D-erythro-1-(imidazol-4-yl)glycerol 3-phosphate + 5-amino-1-(5-phospho-beta-D-ribosyl)imidazole-4-carboxamide + L-glutamate + H(+). It catalyses the reaction L-glutamine + H2O = L-glutamate + NH4(+). It participates in amino-acid biosynthesis; L-histidine biosynthesis; L-histidine from 5-phospho-alpha-D-ribose 1-diphosphate: step 5/9. IGPS catalyzes the conversion of PRFAR and glutamine to IGP, AICAR and glutamate. The HisH subunit catalyzes the hydrolysis of glutamine to glutamate and ammonia as part of the synthesis of IGP and AICAR. The resulting ammonia molecule is channeled to the active site of HisF. This Geobacillus kaustophilus (strain HTA426) protein is Imidazole glycerol phosphate synthase subunit HisH.